A 388-amino-acid chain; its full sequence is Chorismate synthase (388 aa).

2 residues coordinate NADP(+): Arg-39 and Arg-45. FMN contacts are provided by residues 132–134 (RSS), 251–252 (NA), Gly-296, 311–315 (KPIPT), and Arg-337.

It belongs to the chorismate synthase family. Homotetramer. The cofactor is FMNH2.

The catalysed reaction is 5-O-(1-carboxyvinyl)-3-phosphoshikimate = chorismate + phosphate. It participates in metabolic intermediate biosynthesis; chorismate biosynthesis; chorismate from D-erythrose 4-phosphate and phosphoenolpyruvate: step 7/7. Functionally, catalyzes the anti-1,4-elimination of the C-3 phosphate and the C-6 proR hydrogen from 5-enolpyruvylshikimate-3-phosphate (EPSP) to yield chorismate, which is the branch point compound that serves as the starting substrate for the three terminal pathways of aromatic amino acid biosynthesis. This reaction introduces a second double bond into the aromatic ring system. The chain is Chorismate synthase from Staphylococcus aureus (strain Mu50 / ATCC 700699).